Reading from the N-terminus, the 509-residue chain is Proline-rich receptor-like protein kinase PERK15 (509 aa).

Residues 1–44 (MSTDTIPSLSSPPAPEFPSTTPDTATSPAPSQPSIIGPSSLAPF) are disordered. The Extracellular segment spans residues 1 to 61 (MSTDTIPSLS…DGGSRNVALT (61 aa)). Low complexity predominate over residues 18–34 (PSTTPDTATSPAPSQPS). Residues 62–82 (GLITGVVLGATFVLLGVCIFV) form a helical membrane-spanning segment. The Cytoplasmic segment spans residues 83-509 (CFYKRKKRKL…IEPEKNTKDT (427 aa)). Thr132 is subject to Phosphothreonine. The Protein kinase domain occupies 143–423 (FSNTNLLGQG…VRAFEGNISI (281 aa)). Residues 149 to 157 (LGQGGFGYV) and Lys171 contribute to the ATP site. Phosphotyrosine is present on Tyr216. Asp267 (proton acceptor) is an active-site residue. A Phosphoserine modification is found at Ser300. Phosphothreonine occurs at positions 301 and 306. At Tyr314 the chain carries Phosphotyrosine. Positions 468–499 (FGSSECSGLTSDNGQNPSGSSSITEGQRTTQE) are enriched in polar residues. Residues 468-509 (FGSSECSGLTSDNGQNPSGSSSITEGQRTTQEIEPEKNTKDT) are disordered.

It belongs to the protein kinase superfamily. Ser/Thr protein kinase family. Mostly expressed in inflorescence bolts, and, to a lower extent, in flower buds and siliques.

The protein localises to the cell membrane. The enzyme catalyses L-seryl-[protein] + ATP = O-phospho-L-seryl-[protein] + ADP + H(+). It catalyses the reaction L-threonyl-[protein] + ATP = O-phospho-L-threonyl-[protein] + ADP + H(+). The protein is Proline-rich receptor-like protein kinase PERK15 (PERK15) of Arabidopsis thaliana (Mouse-ear cress).